The following is a 470-amino-acid chain: Neuraminidase (470 aa).

The Intravirion segment spans residues 1–6 (MNPNQK). A helical membrane pass occupies residues 7–27 (ILFASATAIVIGTIAVLIGIV). The segment at 11-33 (SATAIVIGTIAVLIGIVNLGLNI) is involved in apical transport and lipid raft association. Topologically, residues 28–470 (NLGLNIGLHL…PDGAKIEYFL (443 aa)) are virion surface. Residues 36–89 (HLKPSCNCSRSQPEATNASQTIINNYYNKTNITQISNTNIQVEERASREFNNLT) are hypervariable stalk region. N-linked (GlcNAc...) asparagine; by host glycans are attached at residues N42, N52, N63, N66, and N87. The head of neuraminidase stretch occupies residues 92-470 (LCTINSWHIY…PDGAKIEYFL (379 aa)). 8 disulfides stabilise this stretch: C93-C419, C125-C130, C185-C232, C234-C239, C280-C293, C282-C291, C320-C338, and C423-C449. Substrate is bound at residue R119. N147 carries an N-linked (GlcNAc...) asparagine; by host glycan. D152 serves as the catalytic Proton donor/acceptor. Position 153 (R153) interacts with substrate. N202 carries an N-linked (GlcNAc...) asparagine; by host glycan. Residue 278–279 (EE) participates in substrate binding. Residue R294 participates in substrate binding. Ca(2+) is bound by residues D295, G299, D326, and N348. R372 lines the substrate pocket. Y406 serves as the catalytic Nucleophile.

The protein belongs to the glycosyl hydrolase 34 family. As to quaternary structure, homotetramer. Ca(2+) serves as cofactor. In terms of processing, N-glycosylated.

The protein localises to the virion membrane. The protein resides in the host apical cell membrane. The catalysed reaction is Hydrolysis of alpha-(2-&gt;3)-, alpha-(2-&gt;6)-, alpha-(2-&gt;8)- glycosidic linkages of terminal sialic acid residues in oligosaccharides, glycoproteins, glycolipids, colominic acid and synthetic substrates.. Its activity is regulated as follows. Inhibited by the neuraminidase inhibitors zanamivir (Relenza) and oseltamivir (Tamiflu). These drugs interfere with the release of progeny virus from infected cells and are effective against all influenza strains. Resistance to neuraminidase inhibitors is quite rare. Catalyzes the removal of terminal sialic acid residues from viral and cellular glycoconjugates. Cleaves off the terminal sialic acids on the glycosylated HA during virus budding to facilitate virus release. Additionally helps virus spread through the circulation by further removing sialic acids from the cell surface. These cleavages prevent self-aggregation and ensure the efficient spread of the progeny virus from cell to cell. Otherwise, infection would be limited to one round of replication. Described as a receptor-destroying enzyme because it cleaves a terminal sialic acid from the cellular receptors. May facilitate viral invasion of the upper airways by cleaving the sialic acid moieties on the mucin of the airway epithelial cells. Likely to plays a role in the budding process through its association with lipid rafts during intracellular transport. May additionally display a raft-association independent effect on budding. Plays a role in the determination of host range restriction on replication and virulence. Sialidase activity in late endosome/lysosome traffic seems to enhance virus replication. The chain is Neuraminidase from Aves.